A 408-amino-acid chain; its full sequence is Biphenyl dioxygenase system ferredoxin--NAD(+) reductase component (408 aa).

4 to 35 (TIAIIGAGLAGSTAARALRAQGYEGRIHLLGD) is an FAD binding site. NAD(+) is bound at residue 145–173 (SLVIVGGGLIGCEVATTARKLSVHVTILE).

This sequence belongs to the bacterial ring-hydroxylating dioxygenase ferredoxin reductase family. This dioxygenase system consists of four proteins: the two subunits of the hydroxylase component (BphA and BphE), a ferredoxin (BphF) and a ferredoxin reductase (BphG). FAD serves as cofactor.

It carries out the reaction 2 reduced [2Fe-2S]-[ferredoxin] + NAD(+) + H(+) = 2 oxidized [2Fe-2S]-[ferredoxin] + NADH. The protein operates within xenobiotic degradation; biphenyl degradation. Its function is as follows. Part of the electron transfer component of biphenyl dioxygenase, transfers electrons from ferredoxin (BphF) to NADH. The chain is Biphenyl dioxygenase system ferredoxin--NAD(+) reductase component (bphG) from Paraburkholderia xenovorans (strain LB400).